Consider the following 1362-residue polypeptide: DNA-directed RNA polymerase subunit beta (1362 aa).

The protein belongs to the RNA polymerase beta chain family. As to quaternary structure, the RNAP catalytic core consists of 2 alpha, 1 beta, 1 beta' and 1 omega subunit. When a sigma factor is associated with the core the holoenzyme is formed, which can initiate transcription.

The catalysed reaction is RNA(n) + a ribonucleoside 5'-triphosphate = RNA(n+1) + diphosphate. In terms of biological role, DNA-dependent RNA polymerase catalyzes the transcription of DNA into RNA using the four ribonucleoside triphosphates as substrates. The protein is DNA-directed RNA polymerase subunit beta of Acinetobacter baylyi (strain ATCC 33305 / BD413 / ADP1).